A 110-amino-acid polypeptide reads, in one-letter code: Large ribosomal subunit protein uL22 (110 aa).

The protein belongs to the universal ribosomal protein uL22 family. In terms of assembly, part of the 50S ribosomal subunit.

Its function is as follows. This protein binds specifically to 23S rRNA; its binding is stimulated by other ribosomal proteins, e.g. L4, L17, and L20. It is important during the early stages of 50S assembly. It makes multiple contacts with different domains of the 23S rRNA in the assembled 50S subunit and ribosome. Functionally, the globular domain of the protein is located near the polypeptide exit tunnel on the outside of the subunit, while an extended beta-hairpin is found that lines the wall of the exit tunnel in the center of the 70S ribosome. This chain is Large ribosomal subunit protein uL22, found in Exiguobacterium sibiricum (strain DSM 17290 / CCUG 55495 / CIP 109462 / JCM 13490 / 255-15).